A 331-amino-acid chain; its full sequence is Biotin synthase (331 aa).

In terms of domain architecture, Radical SAM core spans 39-264; the sequence is SELQTCYLIS…VFPRSMVRLA (226 aa). Cys-54, Cys-58, and Cys-61 together coordinate [4Fe-4S] cluster. [2Fe-2S] cluster is bound by residues Cys-98, Cys-130, Cys-190, and Arg-262.

Belongs to the radical SAM superfamily. Biotin synthase family. As to quaternary structure, homodimer. [4Fe-4S] cluster is required as a cofactor. [2Fe-2S] cluster serves as cofactor.

It carries out the reaction (4R,5S)-dethiobiotin + (sulfur carrier)-SH + 2 reduced [2Fe-2S]-[ferredoxin] + 2 S-adenosyl-L-methionine = (sulfur carrier)-H + biotin + 2 5'-deoxyadenosine + 2 L-methionine + 2 oxidized [2Fe-2S]-[ferredoxin]. It functions in the pathway cofactor biosynthesis; biotin biosynthesis; biotin from 7,8-diaminononanoate: step 2/2. Functionally, catalyzes the conversion of dethiobiotin (DTB) to biotin by the insertion of a sulfur atom into dethiobiotin via a radical-based mechanism. This Chlamydia pneumoniae (Chlamydophila pneumoniae) protein is Biotin synthase.